The chain runs to 861 residues: Valine--tRNA ligase (861 aa).

The 'HIGH' region signature appears at 42–52 (PNITGRIHMGH). A 'KMSKS' region motif is present at residues 521–525 (KMSKS). Lysine 524 is a binding site for ATP. A coiled-coil region spans residues 792 to 861 (VAGLNLQSEI…ILNQILGDLM (70 aa)).

The protein belongs to the class-I aminoacyl-tRNA synthetase family. ValS type 1 subfamily. In terms of assembly, monomer.

It localises to the cytoplasm. The enzyme catalyses tRNA(Val) + L-valine + ATP = L-valyl-tRNA(Val) + AMP + diphosphate. Functionally, catalyzes the attachment of valine to tRNA(Val). As ValRS can inadvertently accommodate and process structurally similar amino acids such as threonine, to avoid such errors, it has a 'posttransfer' editing activity that hydrolyzes mischarged Thr-tRNA(Val) in a tRNA-dependent manner. The sequence is that of Valine--tRNA ligase from Pseudothermotoga lettingae (strain ATCC BAA-301 / DSM 14385 / NBRC 107922 / TMO) (Thermotoga lettingae).